A 135-amino-acid polypeptide reads, in one-letter code: NADH-quinone oxidoreductase subunit K (135 aa).

3 helical membrane passes run 33–53, 63–83, and 95–115; these read VLGL…FAIG, FLFM…AFVV, and IMFI…LAIL.

It belongs to the complex I subunit 4L family. As to quaternary structure, NDH-1 is composed of 14 different subunits. Subunits NuoA, H, J, K, L, M, N constitute the membrane sector of the complex.

Its subcellular location is the cell inner membrane. It carries out the reaction a quinone + NADH + 5 H(+)(in) = a quinol + NAD(+) + 4 H(+)(out). Its function is as follows. NDH-1 shuttles electrons from NADH, via FMN and iron-sulfur (Fe-S) centers, to quinones in the respiratory chain. The immediate electron acceptor for the enzyme in this species is believed to be ubiquinone. Couples the redox reaction to proton translocation (for every two electrons transferred, four hydrogen ions are translocated across the cytoplasmic membrane), and thus conserves the redox energy in a proton gradient. This is NADH-quinone oxidoreductase subunit K from Psychrobacter cryohalolentis (strain ATCC BAA-1226 / DSM 17306 / VKM B-2378 / K5).